We begin with the raw amino-acid sequence, 479 residues long: Aspartyl/glutamyl-tRNA(Asn/Gln) amidotransferase subunit B (479 aa).

Belongs to the GatB/GatE family. GatB subfamily. Heterotrimer of A, B and C subunits.

The catalysed reaction is L-glutamyl-tRNA(Gln) + L-glutamine + ATP + H2O = L-glutaminyl-tRNA(Gln) + L-glutamate + ADP + phosphate + H(+). It catalyses the reaction L-aspartyl-tRNA(Asn) + L-glutamine + ATP + H2O = L-asparaginyl-tRNA(Asn) + L-glutamate + ADP + phosphate + 2 H(+). In terms of biological role, allows the formation of correctly charged Asn-tRNA(Asn) or Gln-tRNA(Gln) through the transamidation of misacylated Asp-tRNA(Asn) or Glu-tRNA(Gln) in organisms which lack either or both of asparaginyl-tRNA or glutaminyl-tRNA synthetases. The reaction takes place in the presence of glutamine and ATP through an activated phospho-Asp-tRNA(Asn) or phospho-Glu-tRNA(Gln). The sequence is that of Aspartyl/glutamyl-tRNA(Asn/Gln) amidotransferase subunit B from Streptococcus mutans serotype c (strain ATCC 700610 / UA159).